The sequence spans 808 residues: Phospholipase D alpha 1 (808 aa).

The C2 domain occupies 1 to 125; the sequence is MAQILLHGTL…LEGEEIDKWV (125 aa). Residue D186 coordinates Ca(2+). In terms of domain architecture, PLD phosphodiesterase 1 spans 326–364; that stretch reads TMFTHHQKIVVVDSELPSGESEKRRILSFVGGIDLCDGR. Catalysis depends on residues H331, K333, and D338. H331 lines the a 1,2-diacyl-sn-glycero-3-phosphate pocket. 2 residues coordinate Ca(2+): H370 and H404. The a 1,2-diacyl-sn-glycero-3-phosphate site is built by Q520 and H659. Residues 654–681 enclose the PLD phosphodiesterase 2 domain; it reads FMIYVHSKMMIVDDEYIIVGSANINQRS. Active-site residues include H659, K661, and D666. Residue E720 participates in Ca(2+) binding.

It belongs to the phospholipase D family. C2-PLD subfamily. Ca(2+) is required as a cofactor.

It carries out the reaction a 1,2-diacyl-sn-glycero-3-phosphocholine + H2O = a 1,2-diacyl-sn-glycero-3-phosphate + choline + H(+). Hydrolyzes glycerol-phospholipids at the terminal phosphodiesteric bond. Plays an important role in various cellular processes. The polypeptide is Phospholipase D alpha 1 (PLD1) (Nicotiana tabacum (Common tobacco)).